The sequence spans 717 residues: UvrABC system protein C (717 aa).

A GIY-YIG domain is found at 16-95 (DAPGVYRFHD…IKEYDPRFNV (80 aa)). The UVR domain maps to 208-243 (DTLIRKLDREMRQASEELEFERAARLRDDLEALRRA). Disordered stretches follow at residues 517–555 (TAAG…GRPR) and 696–717 (HAAL…GESQ). 2 stretches are compositionally biased toward basic and acidic residues: residues 541–553 (EAER…ETGR) and 707–717 (ESRDNAEGESQ).

Belongs to the UvrC family. As to quaternary structure, interacts with UvrB in an incision complex.

The protein localises to the cytoplasm. Its function is as follows. The UvrABC repair system catalyzes the recognition and processing of DNA lesions. UvrC both incises the 5' and 3' sides of the lesion. The N-terminal half is responsible for the 3' incision and the C-terminal half is responsible for the 5' incision. This Saccharopolyspora erythraea (strain ATCC 11635 / DSM 40517 / JCM 4748 / NBRC 13426 / NCIMB 8594 / NRRL 2338) protein is UvrABC system protein C.